A 1486-amino-acid chain; its full sequence is Chromosome partition protein MukB (1486 aa).

Position 34–41 (34–41 (GGNGAGKS)) interacts with ATP. 3 coiled-coil regions span residues 326-418 (LEAD…QYNQ), 444-480 (LETF…QAYQ), and 509-603 (RHLA…RAPV). A flexible hinge region spans residues 666-783 (PGGSEDQRLN…EVPLFGRAAR (118 aa)). Coiled-coil stretches lie at residues 835–923 (EAEI…AKLE), 977–1115 (EMLS…TAKA), and 1209–1266 (VEAI…QNVS).

It belongs to the SMC family. MukB subfamily. As to quaternary structure, homodimerization via its hinge domain. Binds to DNA via its C-terminal region. Interacts, and probably forms a ternary complex, with MukE and MukF via its C-terminal region. The complex formation is stimulated by calcium or magnesium. Interacts with tubulin-related protein FtsZ.

It localises to the cytoplasm. It is found in the nucleoid. Functionally, plays a central role in chromosome condensation, segregation and cell cycle progression. Functions as a homodimer, which is essential for chromosome partition. Involved in negative DNA supercoiling in vivo, and by this means organize and compact chromosomes. May achieve or facilitate chromosome segregation by condensation DNA from both sides of a centrally located replisome during cell division. This chain is Chromosome partition protein MukB, found in Escherichia coli (strain ATCC 8739 / DSM 1576 / NBRC 3972 / NCIMB 8545 / WDCM 00012 / Crooks).